Consider the following 112-residue polypeptide: Putative pterin-4-alpha-carbinolamine dehydratase (112 aa).

It belongs to the pterin-4-alpha-carbinolamine dehydratase family.

It catalyses the reaction (4aS,6R)-4a-hydroxy-L-erythro-5,6,7,8-tetrahydrobiopterin = (6R)-L-erythro-6,7-dihydrobiopterin + H2O. The sequence is that of Putative pterin-4-alpha-carbinolamine dehydratase from Shewanella frigidimarina (strain NCIMB 400).